The following is a 115-amino-acid chain: Potassium-transporting ATPase potassium-binding subunit (115 aa).

The next 2 helical transmembrane spans lie at 8–28 (YFLL…VAFF) and 60–80 (SYCT…YGLL).

The protein belongs to the KdpA family. The system is composed of three essential subunits: KdpA, KdpB and KdpC.

It is found in the cell membrane. Its function is as follows. Part of the high-affinity ATP-driven potassium transport (or Kdp) system, which catalyzes the hydrolysis of ATP coupled with the electrogenic transport of potassium into the cytoplasm. This subunit binds the extracellular potassium ions and delivers the ions to the membrane domain of KdpB through an intramembrane tunnel. This is Potassium-transporting ATPase potassium-binding subunit from Geobacillus stearothermophilus (Bacillus stearothermophilus).